A 150-amino-acid chain; its full sequence is Peptide deformylase 2 (150 aa).

Fe cation contacts are provided by cysteine 89 and histidine 131. Glutamate 132 is an active-site residue. Histidine 135 contributes to the Fe cation binding site.

This sequence belongs to the polypeptide deformylase family. Fe(2+) is required as a cofactor.

It catalyses the reaction N-terminal N-formyl-L-methionyl-[peptide] + H2O = N-terminal L-methionyl-[peptide] + formate. In terms of biological role, removes the formyl group from the N-terminal Met of newly synthesized proteins. Requires at least a dipeptide for an efficient rate of reaction. N-terminal L-methionine is a prerequisite for activity but the enzyme has broad specificity at other positions. The protein is Peptide deformylase 2 of Clostridium acetobutylicum (strain ATCC 824 / DSM 792 / JCM 1419 / IAM 19013 / LMG 5710 / NBRC 13948 / NRRL B-527 / VKM B-1787 / 2291 / W).